Consider the following 500-residue polypeptide: Inner membrane transporter YjeM (500 aa).

The Cytoplasmic segment spans residues 1–7; that stretch reads MPHTIKK. A helical membrane pass occupies residues 8–28; the sequence is MSLIGLILMIFTSVFGFANSP. The Periplasmic portion of the chain corresponds to 29 to 37; that stretch reads SAYYLMGYS. A helical transmembrane segment spans residues 38–58; sequence AIPFYIFSALLFFIPFALMMA. Over 59–82 the chain is Cytoplasmic; the sequence is EMGAAYRKEEGGIYSWMNNSVGPR. The helical transmembrane segment at 83-103 threads the bilayer; sequence FAFIGTFMWFSSYIIWMVSTS. Residues 104-132 lie on the Periplasmic side of the membrane; sequence AKVWVPFSTFLYGSDMTQHWRIAGLEPTQ. The chain crosses the membrane as a helical span at residues 133–153; the sequence is VVGLLAVAWMILVTVVASKGI. Residues 154–163 lie on the Cytoplasmic side of the membrane; it reads NKIARITAVG. A helical transmembrane segment spans residues 164–184; the sequence is GIAVMCLNLVLLLVSITILLL. Over 185 to 209 the chain is Periplasmic; that stretch reads NGGHFAQDINFLASPNPGYQSGLAM. Residues 210–230 traverse the membrane as a helical segment; that stretch reads LSFVVFAIFAYGGIEAVGGLV. The Cytoplasmic portion of the chain corresponds to 231–243; it reads DKTENPEKNFAKG. Residues 244-264 form a helical membrane-spanning segment; the sequence is IVFAAIVISIGYSLAIFLWGV. The Periplasmic portion of the chain corresponds to 265–319; sequence STNWQQVLSNGSVNLGNITYVLMKSLGMTLGNALHLSPEASLSLGVWFARITGLS. A helical membrane pass occupies residues 320–340; sequence MFLAYTGAFFTLCYSPLKAII. Residues 341 to 369 are Cytoplasmic-facing; sequence QGTPKALWPEPMTRLNAMGMPSIAMWMQC. The chain crosses the membrane as a helical span at residues 370-390; it reads GLVTVFILLVSFGGGTASAFF. The Periplasmic segment spans residues 391–394; that stretch reads NKLT. A helical transmembrane segment spans residues 395–415; that stretch reads LMANVSMTLPYLFLALAFPFF. The Cytoplasmic portion of the chain corresponds to 416–433; that stretch reads KARQDLDRPFVIFKTHLS. Residues 434–454 form a helical membrane-spanning segment; that stretch reads AMIATVVVVLVVTFANVFTII. The Periplasmic segment spans residues 455–462; it reads QPVVEAGD. A helical transmembrane segment spans residues 463-483; that stretch reads WDSTLWMIGGPVFFSLLAMAI. Residues 484–500 lie on the Cytoplasmic side of the membrane; sequence YQNYCSRVAKNPQWAVE.

This sequence belongs to the amino acid-polyamine-organocation (APC) superfamily.

Its subcellular location is the cell inner membrane. This Escherichia coli (strain K12) protein is Inner membrane transporter YjeM (yjeM).